Consider the following 127-residue polypeptide: Photosystem II reaction center Psb28 protein (127 aa).

The segment at 107–127 (GLGYSQNQNSDQTDGDANAEA) is disordered. Over residues 109–118 (GYSQNQNSDQ) the composition is skewed to polar residues.

Belongs to the Psb28 family. Part of the photosystem II complex.

The protein resides in the cellular thylakoid membrane. The chain is Photosystem II reaction center Psb28 protein from Parasynechococcus marenigrum (strain WH8102).